Here is a 726-residue protein sequence, read N- to C-terminus: Netrin-A (726 aa).

The signal sequence occupies residues 1 to 29; that stretch reads MIRGILLLLLGTTRFSPIQCISNDVYFKM. Residues 46 to 312 form the Laminin N-terminal domain; the sequence is EPRACIPDFV…AISDFSVGGR (267 aa). 3 N-linked (GlcNAc...) asparagine glycosylation sites follow: Asn108, Asn112, and Asn127. Cystine bridges form between Cys313–Cys322, Cys315–Cys332, Cys334–Cys343, Cys346–Cys366, Cys369–Cys378, Cys371–Cys396, Cys399–Cys408, Cys411–Cys429, Cys432–Cys444, Cys434–Cys451, Cys453–Cys462, and Cys465–Cys479. Laminin EGF-like domains are found at residues 313 to 368, 369 to 431, and 432 to 481; these read CKCN…ECKE, CNCN…VCKA, and CDCH…PCIK. A glycan (N-linked (GlcNAc...) asparagine) is linked at Asn445. Residues 490–516 are disordered; that stretch reads LDTQNTAPEPDEPESSPGSGGDRNGAA. Cystine bridges form between Cys533/Cys671 and Cys549/Cys725. Residues 533-725 form the NTR domain; it reads CGKCRVSTKR…KRFQRRARTC (193 aa). N-linked (GlcNAc...) asparagine glycosylation is found at Asn652 and Asn679.

In terms of tissue distribution, at the midline of developing CNS at the time of commissure formation and in different subsets of neurons, muscles, and epidermal patches.

Its subcellular location is the secreted. It is found in the extracellular space. It localises to the extracellular matrix. Netrins control guidance of CNS commissural axons at the midline and peripheral motor axons to their target muscles. This Drosophila melanogaster (Fruit fly) protein is Netrin-A (NetA).